We begin with the raw amino-acid sequence, 450 residues long: Phosphoglucosamine mutase (450 aa).

Residue Ser101 is the Phosphoserine intermediate of the active site. Mg(2+) is bound by residues Ser101, Asp240, Asp242, and Asp244. Ser101 carries the phosphoserine modification.

It belongs to the phosphohexose mutase family. Mg(2+) is required as a cofactor. Post-translationally, activated by phosphorylation.

It catalyses the reaction alpha-D-glucosamine 1-phosphate = D-glucosamine 6-phosphate. In terms of biological role, catalyzes the conversion of glucosamine-6-phosphate to glucosamine-1-phosphate. This Streptococcus pneumoniae serotype 19F (strain G54) protein is Phosphoglucosamine mutase.